Reading from the N-terminus, the 3075-residue chain is MYVGRIGATTYISRPADSRATPKVIKTQGSITTSNLTSLTTMAQSTYPNEPIVVVGSGCRFPGGANTPSKLWELLREPRDVRSKIPKERFDVDAFYHPDGKHHGRTNAPYAYMLQEDLRAFDGPFFNIQAGEAESMDPQQRLLLETVYEAVSDAGMRIQDLQGSSTAVYVGMMTHDYETVSTRDLESIPTYSATGVAVSVASNRISYFFDWHGPSMTIDTACSSSLVAVHLAVQQLRSGQSSMAIAAGANMILGPMTFVLESKLNMLSPSGRSRMWDAGADGYARGEAVCSVVLKTLSQALRDGDSIECVIRETGVNQDGRTTGITMPNHSAQEALIRATYSKAGLDITNPEDRCQFFEAHGTGTPAGDPQEAEAIATAFFGHKKEASDAENAETPLFVGSVKTVVGHTEGTAGLAGLMKASFAVQHGVIPPNLLFENISPRVAPFYSNLKIATETTPWPTIKPGQPRRVSVNSFGFGGTNAHAIIEEYIKSDQKVPASRQPVEYSDSPSTLNLPLVLSAKSQRSMKTTLESMVQFLQSNPEVNLRDLSWTLLRKRSILPFRRAIVGHSHEAIRAALEAAIEDGIVVSDFSADVKGKPSVLGVFTGQGAQWPGMLKELIVGSSYVRSIAEELDHSLQTLPEKYRPSWTILEQLMLEDEASNVRHASFSQPLCCAVQIVLVRLLKAAGIQFAAVVGHSSGEIACAFATGLISASLAIRIAHLRGVVSAEHAASASGGRGSMLAAGMSYEEAKELCELDAFESRICVAASNSPDSVTFSGDADAIEHLQGVLEDEATFARLLRVDTAYHSHHMLPCAAPYMQALEECGCAVADGDGQVEEGSWYSSVKDSNEPMGLADVTAEYWKDNLVSPVLFSQAVQRAAIMHRPLDVGIEVGCHPALKGPCLATIKDALSDVDLAYTGCLERGKNDMNAFSQALAYLWEQFGIPSLDADRFISTIAPERSCVSLSKQLPTYSWDHSRSYWTESRATRQHLRGPKPHLLLGKLSEYSTPLTFQWLNFVRPRDIEWLDGHALQGQVVFPAAGYIVMAMEAAMEIANSHQVQVQLLEILDMSIDKAVVFDDEDSLVELNLTAEVTSGIGKGDRMILSFIIDSCLSREGDLSTSAKGQLVVTLDEGHLQVTPDNEKQLLPPPEEEHPHMNRVNINSFYHELDLMGYDYSKDFRRLHSMRRADARASGILEFIPLNDEVHGRPLLLHPAPLDIAFQTVIGAYSSPGDRRLRCLYVPTHIDRIALVPSLCLATAASGCDKIAFNTINTYDKGDFLSGDIVAFDAEQTSLFHVENIVFKPFSPPTASTDHPIFAKWSWGPLTPETLLDNPNHWATAQDKEAIPIIERIVYFYIKLFLQQLTREDREQAAFHLQRQIVWCEQVVADAHEGRHQWYDAAWENDTEAQIEQLCARSSYHPHVRLVQRVGQNLLATIRSNGNPFDLMDHDGLLTEFYTNTLSFGPALHYAQDLVGQIAHRYQSMDILEIGAGTGGATKYVLATPQLGFNSYTYTDISTGFFEKAREQFAAFEDRMEFEPLDIRRSPAEQGFTEHVYDLIIASNVLHATPDLEKTMAHARSLLKPGGQMVILEITHRNHTRLGFIFGLFADWWAGIDDGRTMEPFVSFDRWDEILKHVGFSGIDSRTKDRDADLFPTSVFSTHAVNSTIDYLHKPLDAPVKDSYPPLVVVGGQTPKTQRILDEIKAVMPNRQIQLHQRLVDLLDAEDMQAKFTFVVLTELDEELFAGLTEDSFEAVKLLLMYAGNMLWLTENAWVKRPHQASTIGMLRSIRREHPDIGVHIMDVDSAENLDAHFLVEQVLRLEEDIDELAATTTWTQEPEVFWCNGRAWIPRLKHDKSRNNRMNSSRRQIFETLNPSKIPVALKKAAASSSYYLESAETWPVPGAVTAGDRKTVHVRLSHPHALRVGHLGFFYLVQGHVLKGDQALPVVALAERNASIVHVRSDYVHVLEDTAVSANNGSFILAAAAAVLAETVIHSAKSLGADASVLVLNAPGFCAQTLLRAARDSGLRVHLATTSSSTDPSPGADRCVRLHPRDTDRRLKQLLPRGTQAFFDLSTDPSSEGLTQRLPNVLIPSCVRHSTEYLLRDTASAGGKATLPAAYWERVASLANHSLSTHFKENDNASNGCQVLSCTDIVARNNKSRLNASTVISWPDDAALPARIRPIDTETLFAAEKTYLLVGLTGDLGRSLGRWMVLHGARRIVLTSRNPQVSPNWVAHVEELGGQVTVLSMDVTSEDSVDSGLAKLQDLKLPPIGGIAFGPLVLQDVMLKNMDLQMMEMVLKPKVEGARILHEKFSDPASSNPLDFFVMFSSIVAVMGNPGQANYSAANCYLQALAQRRCASGLAASTIDIGAVYGVGFVTRAELEEDFNAIRFMFDSVEEHELHSLFAEAVVSGRRAMHQQQQFKTVLDMADIELTTGIPPLDPTLKDRITFFDDARVGNFKIPERRGKAGDNAAGSKGSVKEQLLQATSLDQVRQIVIDGLSEKLRVTLQIPDGESVHPTIPLIDQGVDSLGAVTVGTWFSKQLYLDLPLLRVLGGASVADLADDAAARLPPSSIPLVAASEGGAETSDNDTSGPEGTDLSASTTITEPSSADEEDEKQEDDNDNSVLALHPLSLGQEYAWRLQKAADDSTIFNNTIGMFMTGSIDAKRLSKALRAVLRRHEIFRTGFAAVGNNADATSLAQIVFGRTKNKVQVIQVADRAGAEEGYRQLVQTQYDITAGDTLRLVDFFWGKDEHLFVVAYHRFVGDGSTTENIFVEASQLYGGVTLDKHVPQFADLATRQREALESGQMDADLAYWESMHHQPTGVVSPVLPRMLLGEDGLNSPNHARQPNSWKQHEAIARLDPMVAFRIRERSRKHKATPMQFYLAAYHVLLARLTGSSDFSIGLADTNRTNVDELAGMGFFANLLPLRFRNFVPHITFGEHLVATKDKVREAMQHARVPYGVLLERLGFEVPGATAETAEPAPLFQAVFDYKQGQAESGSIGSAKMTEVIATRERTPYDVVLEMSDDPTKDPLLTVKLQSSVYEVHHPRAFLESYISILSMFSMNPALKLA.

A Ketosynthase family 3 (KS3) domain is found at 49–488 (NEPIVVVGSG…GTNAHAIIEE (440 aa)). Active-site for beta-ketoacyl synthase activity residues include C222, H361, and H408. The interval 603-945 (VFTGQGAQWP…AYLWEQFGIP (343 aa)) is acyl and malonyl transferase. S697 functions as the For malonyltransferase activity in the catalytic mechanism. An N-terminal hotdog fold region spans residues 997–1133 (HLLLGKLSEY…GQLVVTLDEG (137 aa)). The PKS/mFAS DH domain maps to 997–1311 (HLLLGKLSEY…FKPFSPPTAS (315 aa)). The active-site Proton acceptor; for dehydratase activity is the H1029. A dehydratase-like region spans residues 1029-1041 (HALQGQVVFPAAG). Residues 1156-1311 (MNRVNINSFY…FKPFSPPTAS (156 aa)) are C-terminal hotdog fold. The Proton donor; for dehydratase activity role is filled by D1218. The segment at 1556 to 1594 (YDLIIASNVLHATPDLEKTMAHARSLLKPGGQMVILEIT) is methyltransferase. The segment at 2176 to 2470 (ALPARIRPID…FKIPERRGKA (295 aa)) is beta-ketoacyl reductase. A Carrier domain is found at 2492–2571 (DQVRQIVIDG…DLADDAAARL (80 aa)). O-(pantetheine 4'-phosphoryl)serine is present on S2531. The disordered stretch occupies residues 2582–2624 (SEGGAETSDNDTSGPEGTDLSASTTITEPSSADEEDEKQEDDN). The span at 2591 to 2611 (NDTSGPEGTDLSASTTITEPS) shows a compositional bias: polar residues. Over residues 2612–2624 (SADEEDEKQEDDN) the composition is skewed to acidic residues. A peptide synthetase elongation region spans residues 2633–2989 (PLSLGQEYAW…AETAEPAPLF (357 aa)).

Requires pantetheine 4'-phosphate as cofactor.

It carries out the reaction holo-[lovastatin nonaketide synthase] + 9 malonyl-CoA + S-adenosyl-L-methionine + 11 NADPH + 19 H(+) = dihydromonacolin L-[lovastatin nonaketide synthase] + S-adenosyl-L-homocysteine + 9 CO2 + 11 NADP(+) + 9 CoA + 6 H2O. Its pathway is polyketide biosynthesis; lovastatin biosynthesis. Functionally, nonaketide synthase; part of the gene cluster that mediates the biosynthesis of monakolin K, also known as lovastatin, and which acts as a potent competitive inhibitor of HMG-CoA reductase. Monakolin K biosynthesis is performed in two stages. The first stage is catalyzed by the nonaketide synthase mokA, which belongs to type I polyketide synthases and catalyzes the iterative nine-step formation of the polyketide. This PKS stage is completed by the action of dehydrogenase mokE, which catalyzes the NADPH-dependent reduction of the unsaturated tetra-, penta- and heptaketide intermediates that arise during the mokA-mediated biosynthesis of the nonaketide chain and leads to dihydromonacolin L. Covalently bound dihydromonacolin L is released from mokA by the mokD esterase. Conversion of dihydromonacolin L into monacolin L and then monacolin J is subsequently performed with the participation of molecular oxygen and P450 monoogygenase mokC. Finally, mokF performs the conversion of monacoline J to monacoline K through the addition of the side-chain diketide moiety (2R)-2-methylbutanoate produced by the diketide synthase mokB. The chain is Lovastatin nonaketide synthase mokA from Monascus pilosus (Red mold).